Reading from the N-terminus, the 578-residue chain is NADH-quinone oxidoreductase subunit C/D (578 aa).

The tract at residues Met1–Glu167 is NADH dehydrogenase I subunit C. The NADH dehydrogenase I subunit D stretch occupies residues Glu192–Arg578.

In the N-terminal section; belongs to the complex I 30 kDa subunit family. This sequence in the C-terminal section; belongs to the complex I 49 kDa subunit family. NDH-1 is composed of 13 different subunits. Subunits NuoB, CD, E, F, and G constitute the peripheral sector of the complex.

The protein resides in the cell inner membrane. It carries out the reaction a quinone + NADH + 5 H(+)(in) = a quinol + NAD(+) + 4 H(+)(out). Its function is as follows. NDH-1 shuttles electrons from NADH, via FMN and iron-sulfur (Fe-S) centers, to quinones in the respiratory chain. The immediate electron acceptor for the enzyme in this species is believed to be ubiquinone. Couples the redox reaction to proton translocation (for every two electrons transferred, four hydrogen ions are translocated across the cytoplasmic membrane), and thus conserves the redox energy in a proton gradient. This Buchnera aphidicola subsp. Cinara cedri (strain Cc) protein is NADH-quinone oxidoreductase subunit C/D.